The chain runs to 55 residues: U-reduvitoxin-Pr2a (55 aa).

The first 21 residues, 1 to 21, serve as a signal peptide directing secretion; the sequence is MMKFLLVLFLITITLITMAYS. 3 cysteine pairs are disulfide-bonded: cysteine 26–cysteine 41, cysteine 33–cysteine 46, and cysteine 40–cysteine 51.

It belongs to the venom Ptu1-like knottin family. Expressed by the venom gland (posterior main gland) (at protein level).

It localises to the secreted. Binds reversibly and blocks P/Q-type voltage-gated calcium channels (Cav). This is U-reduvitoxin-Pr2a from Platymeris rhadamanthus (Red spot assassin bug).